A 132-amino-acid chain; its full sequence is Transcription antitermination protein NusB (132 aa).

It belongs to the NusB family.

In terms of biological role, involved in transcription antitermination. Required for transcription of ribosomal RNA (rRNA) genes. Binds specifically to the boxA antiterminator sequence of the ribosomal RNA (rrn) operons. This is Transcription antitermination protein NusB from Campylobacter jejuni subsp. doylei (strain ATCC BAA-1458 / RM4099 / 269.97).